A 369-amino-acid polypeptide reads, in one-letter code: 3 beta-hydroxysteroid dehydrogenase type 7 (369 aa).

Tyrosine 159 serves as the catalytic Proton acceptor. Residue lysine 163 participates in NAD(+) binding. The next 2 membrane-spanning stretches (helical) occupy residues 289 to 309 and 312 to 334; these read LLPY…QWLL and LVLY…FTVS.

The protein belongs to the 3-beta-HSD family. As to expression, predominantly expressed in liver.

The protein localises to the endoplasmic reticulum membrane. The enzyme catalyses 7alpha-hydroxycholesterol + NAD(+) = 7alpha-hydroxycholest-4-en-3-one + NADH + H(+). It carries out the reaction 7alpha,25-dihydroxycholesterol + NAD(+) = 7alpha,25-dihydroxy-4-cholesten-3-one + NADH + H(+). It catalyses the reaction (25R)-cholest-5-en-3beta,7alpha,26-triol + NAD(+) = (25R)-7alpha,26-dihydroxycholest-4-en-3-one + NADH + H(+). The catalysed reaction is (24S)-7alpha-dihydroxycholesterol + NAD(+) = (24S)-7alpha,24-dihydroxycholest-4-en-3-one + NADH + H(+). It participates in lipid metabolism; steroid biosynthesis. Functionally, the 3-beta-HSD enzymatic system plays a crucial role in the biosynthesis of all classes of hormonal steroids. HSD VII is active against four 7-alpha-hydroxylated sterols. Does not metabolize several different C(19/21) steroids as substrates. Involved in bile acid synthesis. Plays a key role in cell positioning and movement in lymphoid tissues by mediating degradation of 7-alpha,25-dihydroxycholesterol (7-alpha,25-OHC): 7-alpha,25-OHC acts as a ligand for the G protein-coupled receptor GPR183/EBI2, a chemotactic receptor for a number of lymphoid cells. This chain is 3 beta-hydroxysteroid dehydrogenase type 7, found in Mus musculus (Mouse).